Reading from the N-terminus, the 163-residue chain is SsrA-binding protein (163 aa).

Belongs to the SmpB family.

The protein resides in the cytoplasm. In terms of biological role, required for rescue of stalled ribosomes mediated by trans-translation. Binds to transfer-messenger RNA (tmRNA), required for stable association of tmRNA with ribosomes. tmRNA and SmpB together mimic tRNA shape, replacing the anticodon stem-loop with SmpB. tmRNA is encoded by the ssrA gene; the 2 termini fold to resemble tRNA(Ala) and it encodes a 'tag peptide', a short internal open reading frame. During trans-translation Ala-aminoacylated tmRNA acts like a tRNA, entering the A-site of stalled ribosomes, displacing the stalled mRNA. The ribosome then switches to translate the ORF on the tmRNA; the nascent peptide is terminated with the 'tag peptide' encoded by the tmRNA and targeted for degradation. The ribosome is freed to recommence translation, which seems to be the essential function of trans-translation. The sequence is that of SsrA-binding protein from Shewanella baltica (strain OS223).